The primary structure comprises 418 residues: Putative ion-transport protein YfeO (418 aa).

Helical transmembrane passes span 10–30 (LLLSLPAVAIGIASSLILIVV), 54–74 (DSPLWIIGVLTLTGIAVGLVI), 99–119 (ALPGLIVALILGLAGGVSLGP), 120–140 (EHPIMTVNIALAVAIGARLLP), 149–169 (ILASAGTIGALFGTPVAAALI), 186–206 (LFAPLMAAAAGALTTGLFFHP), 223–243 (ILSGAIVAAIAIAAGMVAVWC), 258–278 (VLVLGIGGFILGILGVIGGPV), 300–320 (DYFLLAVIKLAALVVAAASGF), 322–342 (GGRIFPAVFVGVALGLMLHEH), 343–363 (VPAVPAAITVSCAILGIVLVV), and 371–391 (LFMAAVVVPNTTLLPLLCIVM).

Belongs to the chloride channel (TC 2.A.49) family.

It is found in the cell membrane. This Escherichia coli O8 (strain IAI1) protein is Putative ion-transport protein YfeO.